The chain runs to 591 residues: Phenylalanine--tRNA ligase beta subunit (591 aa).

In terms of domain architecture, B5 spans 304–380 (LSYREMTVTT…VAFGYNNLIT (77 aa)). Mg(2+) contacts are provided by aspartate 358, aspartate 364, glutamate 367, and aspartate 368.

Belongs to the phenylalanyl-tRNA synthetase beta subunit family. Type 2 subfamily. In terms of assembly, tetramer of two alpha and two beta subunits. The cofactor is Mg(2+).

It is found in the cytoplasm. It carries out the reaction tRNA(Phe) + L-phenylalanine + ATP = L-phenylalanyl-tRNA(Phe) + AMP + diphosphate + H(+). The chain is Phenylalanine--tRNA ligase beta subunit from Caenorhabditis elegans.